Consider the following 517-residue polypeptide: Bifunctional purine biosynthesis protein PurH (517 aa).

Residues 1-145 enclose the MGS-like domain; it reads MSPLALVSVS…KNHKYVSVLV (145 aa).

It belongs to the PurH family.

It carries out the reaction (6R)-10-formyltetrahydrofolate + 5-amino-1-(5-phospho-beta-D-ribosyl)imidazole-4-carboxamide = 5-formamido-1-(5-phospho-D-ribosyl)imidazole-4-carboxamide + (6S)-5,6,7,8-tetrahydrofolate. It catalyses the reaction IMP + H2O = 5-formamido-1-(5-phospho-D-ribosyl)imidazole-4-carboxamide. It functions in the pathway purine metabolism; IMP biosynthesis via de novo pathway; 5-formamido-1-(5-phospho-D-ribosyl)imidazole-4-carboxamide from 5-amino-1-(5-phospho-D-ribosyl)imidazole-4-carboxamide (10-formyl THF route): step 1/1. Its pathway is purine metabolism; IMP biosynthesis via de novo pathway; IMP from 5-formamido-1-(5-phospho-D-ribosyl)imidazole-4-carboxamide: step 1/1. The protein is Bifunctional purine biosynthesis protein PurH of Prochlorococcus marinus (strain MIT 9215).